Here is a 130-residue protein sequence, read N- to C-terminus: Succinate dehydrogenase assembly factor 3, mitochondrial (130 aa).

A mitochondrion-targeting transit peptide spans 1 to 8 (MRPSLLRL).

Belongs to the complex I LYR family. SDHAF3 subfamily. Interacts with the iron-sulfur protein subunit within the SDH catalytic dimer.

The protein resides in the mitochondrion matrix. Plays an essential role in the assembly of succinate dehydrogenase (SDH), an enzyme complex (also referred to as respiratory complex II) that is a component of both the tricarboxylic acid (TCA) cycle and the mitochondrial electron transport chain, and which couples the oxidation of succinate to fumarate with the reduction of ubiquinone (coenzyme Q) to ubiquinol. Promotes maturation of the iron-sulfur protein subunit of the SDH catalytic dimer, protecting it from the deleterious effects of oxidants. May act together with SDHAF1. This is Succinate dehydrogenase assembly factor 3, mitochondrial from Gibberella zeae (strain ATCC MYA-4620 / CBS 123657 / FGSC 9075 / NRRL 31084 / PH-1) (Wheat head blight fungus).